A 316-amino-acid chain; its full sequence is Porphobilinogen deaminase (316 aa).

Position 245 is an S-(dipyrrolylmethanemethyl)cysteine (C245).

Belongs to the HMBS family. Monomer. The cofactor is dipyrromethane.

The enzyme catalyses 4 porphobilinogen + H2O = hydroxymethylbilane + 4 NH4(+). It participates in porphyrin-containing compound metabolism; protoporphyrin-IX biosynthesis; coproporphyrinogen-III from 5-aminolevulinate: step 2/4. The protein operates within porphyrin-containing compound metabolism; chlorophyll biosynthesis. Its function is as follows. Tetrapolymerization of the monopyrrole PBG into the hydroxymethylbilane pre-uroporphyrinogen in several discrete steps. This chain is Porphobilinogen deaminase, found in Prochlorococcus marinus (strain AS9601).